A 536-amino-acid chain; its full sequence is Suppressor of cytokine signaling 5 (536 aa).

The required for interaction with IL4R stretch occupies residues 1–50 (MDKVGKMWNNFKYRCQNLFGHEGGSRSENVDMNSNRCLSVKKKNISLGDS). The tract at residues 115–175 (SRHAPWGGKK…SVSSRTVGSR (61 aa)) is disordered. Residues 158–169 (VSSVHDMDSVSS) are compositionally biased toward low complexity. The SH2 domain occupies 381 to 476 (CYWGVMDRYE…FFEPLLTISL (96 aa)). The region spanning 471-520 (LLTISLNRTFPFSLQYICRAVICRCTTYDGIDGLPLPSMLQDFLKEYHYK) is the SOCS box domain.

In terms of assembly, interacts with EGFR. Interacts with ELOB and ELOC; mediates EGFR ubiquitination and degradation. Interacts with IL4R; inhibits IL4 signaling. Phosphorylated. Phosphorylation is induced by EGF.

Its pathway is protein modification; protein ubiquitination. Its function is as follows. SOCS family proteins form part of a classical negative feedback system that regulates cytokine signal transduction. May be a substrate-recognition component of a SCF-like ECS (Elongin BC-CUL2/5-SOCS-box protein) E3 ubiquitin-protein ligase complex which mediates the ubiquitination and subsequent proteasomal degradation of target proteins. Inhibits for instance EGF signaling by mediating the degradation of the EGF receptor/EGFR. Involved in the regulation of T-helper cell differentiation by inhibiting of the IL4 signaling pathway which promotes differentiation into the Th2 phenotype. Can also partially inhibit IL6 and LIF signaling. The chain is Suppressor of cytokine signaling 5 (SOCS5) from Bos taurus (Bovine).